The sequence spans 442 residues: MRLSRYFLPILKENPKEAEIVSHRLMLRSGMIRQQSAGIYSWLPIGLKVLNKVCTIIREEQNRAGANEILMPTIQSADLWRESGRYDAYGKEMLRIQDRQKREMLFGPTNEEMVTDIFRSYVRSYKDLPLNLYHIQWKFRDEVRPRFGVMRSREFLMKDAYSFDLDYEGAKMAYYRMFVSYLRTFARVGLQAIPMRADTGPIGGDLSHEFIILAETGESQVYCDRAYLDLAVPGADTDFRNDAQLTDIVTRWTTPYAATDEMHDEADWAKVKPESQVSARGIEVGHIFHFGTKYSEPMGAKVQGPDGKEHLVSMGSYGIGPSRLVAAAIEASHDDAGIIWPKTIAPFGAGIVNMKPGDEGCDGVSEKLYEALTNAGVDPLLDDKDERPGAKFATMDLIGLPTQVIVGPRGVAAGEVEVKDRKTGERQSLGIKAAINMLTAQA.

The protein belongs to the class-II aminoacyl-tRNA synthetase family. ProS type 2 subfamily. As to quaternary structure, homodimer.

Its subcellular location is the cytoplasm. The catalysed reaction is tRNA(Pro) + L-proline + ATP = L-prolyl-tRNA(Pro) + AMP + diphosphate. Catalyzes the attachment of proline to tRNA(Pro) in a two-step reaction: proline is first activated by ATP to form Pro-AMP and then transferred to the acceptor end of tRNA(Pro). The sequence is that of Proline--tRNA ligase from Brucella abortus (strain S19).